We begin with the raw amino-acid sequence, 307 residues long: Golgi to ER traffic protein 2 (307 aa).

The Cytoplasmic segment spans residues 1 to 173 (MSDSTDSPAV…QAYDTYQQKL (173 aa)). Over residues 41 to 52 (LSQGSSVKTTGV) the composition is skewed to polar residues. The disordered stretch occupies residues 41-73 (LSQGSSVKTTGVKSVLDEPQPTATSSAIHDEDP). A helical membrane pass occupies residues 174–194 (WKSRFLVIRVVVTLFNFFYHY). Topologically, residues 195-220 (LNVPSFHASNYSYVRDLAQDEFPVRN) are lumenal. The chain crosses the membrane as a helical span at residues 221 to 240 (FFTWFAAFEVIIVLQYYTVF). The Cytoplasmic portion of the chain corresponds to 241–284 (HKLGLFHAANQNSMIMKLMSMGSMVLPQLNTYQPLVARFLGYYE). Residues 285–305 (LFGIIFGDLSLVIVLFGLLSF) form a helical membrane-spanning segment. Residues 306–307 (TK) lie on the Lumenal side of the membrane.

Belongs to the GET2 family. In terms of assembly, component of the Golgi to ER traffic (GET) complex, which is composed of GET1, GET2 and GET3. Within the complex, GET1 and GET2 form a heterotetramer which is stabilized by phosphatidylinositol binding and which binds to the GET3 homodimer.

It is found in the endoplasmic reticulum membrane. It localises to the golgi apparatus membrane. In terms of biological role, required for the post-translational delivery of tail-anchored (TA) proteins to the endoplasmic reticulum. Together with GET1, acts as a membrane receptor for soluble GET3, which recognizes and selectively binds the transmembrane domain of TA proteins in the cytosol. The GET complex cooperates with the HDEL receptor ERD2 to mediate the ATP-dependent retrieval of resident ER proteins that contain a C-terminal H-D-E-L retention signal from the Golgi to the ER. This chain is Golgi to ER traffic protein 2, found in Candida tropicalis (strain ATCC MYA-3404 / T1) (Yeast).